The primary structure comprises 441 residues: Trigger factor (441 aa).

The region spanning 161 to 246 (GDKVTIDFLG…VHEVLGEKLP (86 aa)) is the PPIase FKBP-type domain.

Belongs to the FKBP-type PPIase family. Tig subfamily.

Its subcellular location is the cytoplasm. The catalysed reaction is [protein]-peptidylproline (omega=180) = [protein]-peptidylproline (omega=0). Involved in protein export. Acts as a chaperone by maintaining the newly synthesized protein in an open conformation. Functions as a peptidyl-prolyl cis-trans isomerase. The chain is Trigger factor from Teredinibacter turnerae (strain ATCC 39867 / T7901).